The chain runs to 523 residues: Histidine ammonia-lyase (523 aa).

A cross-link (5-imidazolinone (Ala-Gly)) is located at residues 148 to 150; that stretch reads ASG. 2,3-didehydroalanine (Ser) is present on S149.

It belongs to the PAL/histidase family. Contains an active site 4-methylidene-imidazol-5-one (MIO), which is formed autocatalytically by cyclization and dehydration of residues Ala-Ser-Gly.

The protein localises to the cytoplasm. It carries out the reaction L-histidine = trans-urocanate + NH4(+). The protein operates within amino-acid degradation; L-histidine degradation into L-glutamate; N-formimidoyl-L-glutamate from L-histidine: step 1/3. The protein is Histidine ammonia-lyase of Chloroflexus aurantiacus (strain ATCC 29366 / DSM 635 / J-10-fl).